A 177-amino-acid polypeptide reads, in one-letter code: Large ribosomal subunit protein uL6 (177 aa).

The protein belongs to the universal ribosomal protein uL6 family. In terms of assembly, part of the 50S ribosomal subunit.

Its function is as follows. This protein binds to the 23S rRNA, and is important in its secondary structure. It is located near the subunit interface in the base of the L7/L12 stalk, and near the tRNA binding site of the peptidyltransferase center. The polypeptide is Large ribosomal subunit protein uL6 (Allorhizobium ampelinum (strain ATCC BAA-846 / DSM 112012 / S4) (Agrobacterium vitis (strain S4))).